Reading from the N-terminus, the 711-residue chain is MMQESGSEAKSNGSTIQNGSSGGNHLLECGTLRDTRSNGEAPAVDLGAADLAHVQQQQQQALQVARQLLLQQQQQQQQQQQQQQQQQQQQQQQQQQQQQQQQQQQQQQQVSGLKSPKRNDKQPALQVPVSVAMMTPQVITPQQMQQILQQQVLSPQQLQVLLQQQQALMLQQQQLQEFYKKQQEQLQLQLLQQQHAGKQPKEQQQQQVATQQLAFQQQLLQMQQLQQQHLLSLQRQGLLTIQPGQPALPLQPLAQGMIPTELQQLWKEVTSAHTAEETTGSNHSSLDLTSTCVSSSAPSKTSLIMNPHASTNGQLSVHTPKRESLSHEEHPHSHPLYGHGVCKWPGCEAVCDDFPAFLKHLNSEHALDDRSTAQCRVQMQVVQQLELQLAKDKERLQAMMTHLHVKSTEPKAAPQPLNLVSSVTLSKSASEASPQSLPHTPTTPTAPLTPVTQGPSVITTTSMHTVGPIRRRYSDKYNVPISSADIAQNQEFYKNAEVRPPFTYASLIRQAILESPEKQLTLNEIYNWFTRMFAYFRRNAATWKNAVRHNLSLHKCFVRVENVKGAVWTVDEVEFQKRRPQKISGNPSLIKNMQSGHAYCTPLNAALQASMAENSIPLYTTASMGNPTLGSLASAIREELNGAMEHTNSNESDSSPGRSPMQAVHPIHVKEEPLDPEEAEGPLSLVTTANHSPDFDHDRDYEDEPVNEDME.

The segment covering 1 to 19 has biased composition (polar residues); it reads MMQESGSEAKSNGSTIQNG. A disordered region spans residues 1–41; sequence MMQESGSEAKSNGSTIQNGSSGGNHLLECGTLRDTRSNGEA. S115 is subject to Phosphoserine. 2 disordered regions span residues 273-292 and 305-332; these read HTAE…TSTC and MNPH…EHPH. Positions 305 to 317 are enriched in polar residues; sequence MNPHASTNGQLSV. A compositionally biased stretch (basic and acidic residues) spans 320–332; that stretch reads PKRESLSHEEHPH. Residue K321 forms a Glycyl lysine isopeptide (Lys-Gly) (interchain with G-Cter in SUMO2) linkage. The segment at 340-365 adopts a C2H2-type zinc-finger fold; sequence GVCKWPGCEAVCDDFPAFLKHLNSEH. A leucine-zipper region spans residues 382–403; the sequence is VQQLELQLAKDKERLQAMMTHL. Residues K406 and K411 each participate in a glycyl lysine isopeptide (Lys-Gly) (interchain with G-Cter in SUMO2) cross-link. The interval 416 to 420 is CTBP1-binding; the sequence is PLNLV. The segment covering 424–437 has biased composition (polar residues); it reads TLSKSASEASPQSL. The segment at 424 to 456 is disordered; it reads TLSKSASEASPQSLPHTPTTPTAPLTPVTQGPS. Low complexity predominate over residues 438–452; sequence PHTPTTPTAPLTPVT. A Glycyl lysine isopeptide (Lys-Gly) (interchain with G-Cter in SUMO2) cross-link involves residue K476. A DNA-binding region (fork-head) is located at residues 499-589; the sequence is RPPFTYASLI…PQKISGNPSL (91 aa). Positions 645-711 are disordered; sequence EHTNSNESDS…EDEPVNEDME (67 aa). Polar residues predominate over residues 646–657; sequence HTNSNESDSSPG. Phosphothreonine is present on T687. The residue at position 692 (S692) is a Phosphoserine. Residues 701–711 are compositionally biased toward acidic residues; sequence YEDEPVNEDME.

Forms homodimers and heterodimers with FOXP2 and FOXP4. Dimerization is required for DNA-binding. Self-associates. Interacts with CTBP1. Interacts with NCOR2 and AR. Interacts with FOXP2. Interacts with TBR1. Interacts with AURKA; this interaction facilitates the phosphorylation of FOXP1, which suppresses the expression of FBXL7. Interacts with ZMYM2.

The protein resides in the nucleus. Transcriptional repressor. Can act with CTBP1 to synergistically repress transcription but CTPBP1 is not essential. Plays an important role in the specification and differentiation of lung epithelium. Acts cooperatively with FOXP4 to regulate lung secretory epithelial cell fate and regeneration by restricting the goblet cell lineage program; the function may involve regulation of AGR2. Essential transcriptional regulator of B-cell development. Involved in regulation of cardiac muscle cell proliferation. Involved in the columnar organization of spinal motor neurons. Promotes the formation of the lateral motor neuron column (LMC) and the preganglionic motor column (PGC) and is required for respective appropriate motor axon projections. The segment-appropriate generation of spinal cord motor columns requires cooperation with other Hox proteins. Can regulate PITX3 promoter activity; may promote midbrain identity in embryonic stem cell-derived dopamine neurons by regulating PITX3. Negatively regulates the differentiation of T follicular helper cells T(FH)s. Involved in maintenance of hair follicle stem cell quiescence; the function probably involves regulation of FGF18. Represses transcription of various pro-apoptotic genes and cooperates with NF-kappa B-signaling in promoting B-cell expansion by inhibition of caspase-dependent apoptosis. Binds to CSF1R promoter elements and is involved in regulation of monocyte differentiation and macrophage functions; repression of CSF1R in monocytes seems to involve NCOR2 as corepressor. Involved in endothelial cell proliferation, tube formation and migration indicative for a role in angiogenesis; the role in neovascularization seems to implicate suppression of SEMA5B. Can negatively regulate androgen receptor signaling. Acts as a transcriptional activator of the FBXL7 promoter; this activity is regulated by AURKA. The sequence is that of Forkhead box protein P1 (Foxp1) from Rattus norvegicus (Rat).